Here is a 256-residue protein sequence, read N- to C-terminus: Dihydroorotate dehydrogenase B (NAD(+)), electron transfer subunit (256 aa).

The FAD-binding FR-type domain occupies 1–101 (MKKAHLTVQS…LGPLGNGFPV (101 aa)). FAD is bound by residues 52–55 (RPLS), 69–71 (IYR), and 76–77 (GT). 4 residues coordinate [2Fe-2S] cluster: C220, C225, C228, and C243.

This sequence belongs to the PyrK family. Heterotetramer of 2 PyrK and 2 PyrD type B subunits. It depends on [2Fe-2S] cluster as a cofactor. The cofactor is FAD.

Its pathway is pyrimidine metabolism; UMP biosynthesis via de novo pathway; orotate from (S)-dihydroorotate (NAD(+) route): step 1/1. In terms of biological role, responsible for channeling the electrons from the oxidation of dihydroorotate from the FMN redox center in the PyrD type B subunit to the ultimate electron acceptor NAD(+). The sequence is that of Dihydroorotate dehydrogenase B (NAD(+)), electron transfer subunit from Bacillus velezensis (strain DSM 23117 / BGSC 10A6 / LMG 26770 / FZB42) (Bacillus amyloliquefaciens subsp. plantarum).